The sequence spans 81 residues: Large ribosomal subunit protein bL31B (81 aa).

Belongs to the bacterial ribosomal protein bL31 family. Type B subfamily. In terms of assembly, part of the 50S ribosomal subunit.

This chain is Large ribosomal subunit protein bL31B, found in Borreliella burgdorferi (strain ZS7) (Borrelia burgdorferi).